The sequence spans 557 residues: Hepatocyte nuclear factor 1-beta (557 aa).

The interval 1 to 31 (MVSKLTSLQQELLSALLSSGVTKEVLVQALE) is dimerization. Residues 1–32 (MVSKLTSLQQELLSALLSSGVTKEVLVQALEE) form the HNF-p1 domain. 4 positions are modified to phosphoserine: serine 49, serine 52, serine 75, and serine 80. The segment at 64-85 (TLTNGHAKGRLSGDEGSEDGDD) is disordered. Positions 93-188 (KELQALNTEE…ILRQFNQTVQ (96 aa)) constitute a POU-specific atypical domain. The homeobox; HNF1-type DNA-binding region spans 231–311 (MRRNRFKWGP…NRRKEEAFRQ (81 aa)). The disordered stretch occupies residues 324–352 (HSLNPLLSHGSPHHQPSSSPPNKLSGVRY). Low complexity predominate over residues 328–344 (PLLSHGSPHHQPSSSPP).

Belongs to the HNF1 homeobox family. In terms of assembly, binds DNA as a dimer. Can form homodimer or heterodimer with HNF1-alpha. Interacts (via HNF-p1 domain) with PCBD1; the interaction increases its transactivation activity.

The protein localises to the nucleus. In terms of biological role, transcription factor that binds to the inverted palindrome 5'-GTTAATNATTAAC-3'. Binds to the FPC element in the cAMP regulatory unit of the PLAU gene. Transcriptional activity is increased by coactivator PCBD1. The chain is Hepatocyte nuclear factor 1-beta (HNF1B) from Homo sapiens (Human).